A 395-amino-acid polypeptide reads, in one-letter code: Flap endonuclease 1 (395 aa).

The tract at residues 1 to 104 (MGIKHLYQII…GELAKRIARK (104 aa)) is N-domain. Aspartate 34 is a Mg(2+) binding site. 2 residues coordinate DNA: arginine 47 and arginine 70. Aspartate 86 lines the Mg(2+) pocket. The disordered stretch occupies residues 103–123 (RKQEAAEQHEEAKETGTTEDV). Residues 122 to 253 (DVEKFSRRTV…NTALKLIRDH (132 aa)) are I-domain. Glutamate 158, glutamate 160, aspartate 179, and aspartate 181 together coordinate Mg(2+). A DNA-binding site is contributed by glutamate 158. Positions 231 and 233 each coordinate DNA. Position 233 (aspartate 233) interacts with Mg(2+). The interval 341–349 (QQSRLEGFF) is interaction with PCNA. Positions 356-389 (DEEKASLKRKHEEKLEAAKKKKKEDAKAKREAKS) are enriched in basic and acidic residues. A disordered region spans residues 356 to 395 (DEEKASLKRKHEEKLEAAKKKKKEDAKAKREAKSRPKGTA).

Belongs to the XPG/RAD2 endonuclease family. FEN1 subfamily. As to quaternary structure, interacts with PCNA. Three molecules of FEN1 bind to one PCNA trimer with each molecule binding to one PCNA monomer. PCNA stimulates the nuclease activity without altering cleavage specificity. The cofactor is Mg(2+). Post-translationally, phosphorylated. Phosphorylation upon DNA damage induces relocalization to the nuclear plasma.

The protein localises to the nucleus. The protein resides in the nucleolus. It localises to the nucleoplasm. It is found in the mitochondrion. In terms of biological role, structure-specific nuclease with 5'-flap endonuclease and 5'-3' exonuclease activities involved in DNA replication and repair. During DNA replication, cleaves the 5'-overhanging flap structure that is generated by displacement synthesis when DNA polymerase encounters the 5'-end of a downstream Okazaki fragment. It enters the flap from the 5'-end and then tracks to cleave the flap base, leaving a nick for ligation. Also involved in the long patch base excision repair (LP-BER) pathway, by cleaving within the apurinic/apyrimidinic (AP) site-terminated flap. Acts as a genome stabilization factor that prevents flaps from equilibrating into structures that lead to duplications and deletions. Also possesses 5'-3' exonuclease activity on nicked or gapped double-stranded DNA, and exhibits RNase H activity. Also involved in replication and repair of rDNA and in repairing mitochondrial DNA. The protein is Flap endonuclease 1 of Uncinocarpus reesii (strain UAMH 1704).